Here is a 161-residue protein sequence, read N- to C-terminus: Methylated-DNA--protein-cysteine methyltransferase (161 aa).

Catalysis depends on cysteine 128, which acts as the Nucleophile; methyl group acceptor.

The protein belongs to the MGMT family.

It is found in the cytoplasm. The catalysed reaction is a 6-O-methyl-2'-deoxyguanosine in DNA + L-cysteinyl-[protein] = S-methyl-L-cysteinyl-[protein] + a 2'-deoxyguanosine in DNA. It catalyses the reaction a 4-O-methyl-thymidine in DNA + L-cysteinyl-[protein] = a thymidine in DNA + S-methyl-L-cysteinyl-[protein]. Involved in the cellular defense against the biological effects of O6-methylguanine (O6-MeG) and O4-methylthymine (O4-MeT) in DNA. Repairs the methylated nucleobase in DNA by stoichiometrically transferring the methyl group to a cysteine residue in the enzyme. This is a suicide reaction: the enzyme is irreversibly inactivated. The protein is Methylated-DNA--protein-cysteine methyltransferase of Methanocaldococcus vulcanius (strain ATCC 700851 / DSM 12094 / M7) (Methanococcus vulcanius).